The primary structure comprises 466 residues: Soluble pyridine nucleotide transhydrogenase (466 aa).

36–45 contributes to the FAD binding site; that stretch reads ERYQNVGGGC.

It belongs to the class-I pyridine nucleotide-disulfide oxidoreductase family. FAD is required as a cofactor.

Its subcellular location is the cytoplasm. The catalysed reaction is NAD(+) + NADPH = NADH + NADP(+). In terms of biological role, conversion of NADPH, generated by peripheral catabolic pathways, to NADH, which can enter the respiratory chain for energy generation. This chain is Soluble pyridine nucleotide transhydrogenase, found in Escherichia coli O9:H4 (strain HS).